Reading from the N-terminus, the 329-residue chain is Glycerol-3-phosphate dehydrogenase [NAD(P)+] (329 aa).

W15, H35, and K107 together coordinate NADPH. Residues K107, G135, and S137 each coordinate sn-glycerol 3-phosphate. A139 serves as a coordination point for NADPH. The sn-glycerol 3-phosphate site is built by K190, D243, S253, R254, and N255. The Proton acceptor role is filled by K190. R254 serves as a coordination point for NADPH. Residues L276 and E278 each contribute to the NADPH site.

The protein belongs to the NAD-dependent glycerol-3-phosphate dehydrogenase family.

The protein localises to the cytoplasm. The catalysed reaction is sn-glycerol 3-phosphate + NAD(+) = dihydroxyacetone phosphate + NADH + H(+). The enzyme catalyses sn-glycerol 3-phosphate + NADP(+) = dihydroxyacetone phosphate + NADPH + H(+). It participates in membrane lipid metabolism; glycerophospholipid metabolism. Catalyzes the reduction of the glycolytic intermediate dihydroxyacetone phosphate (DHAP) to sn-glycerol 3-phosphate (G3P), the key precursor for phospholipid synthesis. In Rhodopseudomonas palustris (strain BisB5), this protein is Glycerol-3-phosphate dehydrogenase [NAD(P)+].